Consider the following 245-residue polypeptide: tRNA1(Val) (adenine(37)-N6)-methyltransferase (245 aa).

Belongs to the methyltransferase superfamily. tRNA (adenine-N(6)-)-methyltransferase family.

It localises to the cytoplasm. It carries out the reaction adenosine(37) in tRNA1(Val) + S-adenosyl-L-methionine = N(6)-methyladenosine(37) in tRNA1(Val) + S-adenosyl-L-homocysteine + H(+). Functionally, specifically methylates the adenine in position 37 of tRNA(1)(Val) (anticodon cmo5UAC). The protein is tRNA1(Val) (adenine(37)-N6)-methyltransferase of Shigella dysenteriae serotype 1 (strain Sd197).